Reading from the N-terminus, the 230-residue chain is Broad-specificity phosphatase YOR283W (230 aa).

His24 serves as the catalytic Tele-phosphohistidine intermediate. Residues 36–37 (QG) and 102–105 (ERYM) contribute to the substrate site. Glu102 functions as the Proton donor/acceptor in the catalytic mechanism.

It belongs to the phosphoglycerate mutase family. BPG-dependent PGAM subfamily.

It is found in the cytoplasm. The protein localises to the nucleus. Functionally, metal-independent phosphatase active against a broad range of phosphorylated substrates including nucleoside tri- and diphosphates, phosphorylated organic acids, and amino acids. Shows no activity against phytic acid, phosphorylated carbohydrates, and nucleoside monophosphates. In Saccharomyces cerevisiae (strain ATCC 204508 / S288c) (Baker's yeast), this protein is Broad-specificity phosphatase YOR283W.